The sequence spans 392 residues: Homoserine O-acetyltransferase (392 aa).

In terms of domain architecture, AB hydrolase-1 spans 52 to 356 (NVVVVLHALT…ICGHDGFLVE (305 aa)). Ser-157 acts as the Nucleophile in catalysis. Arg-227 contacts substrate. Active-site residues include Asp-320 and His-350. Residue Asp-351 participates in substrate binding. Residues 373–392 (SQSAGPGGAGPGSRKGTTRR) are disordered.

This sequence belongs to the AB hydrolase superfamily. MetX family. Homodimer.

It localises to the cytoplasm. It catalyses the reaction L-homoserine + acetyl-CoA = O-acetyl-L-homoserine + CoA. It functions in the pathway amino-acid biosynthesis; L-methionine biosynthesis via de novo pathway; O-acetyl-L-homoserine from L-homoserine: step 1/1. Functionally, transfers an acetyl group from acetyl-CoA to L-homoserine, forming acetyl-L-homoserine. The polypeptide is Homoserine O-acetyltransferase (Mycolicibacterium paratuberculosis (strain ATCC BAA-968 / K-10) (Mycobacterium paratuberculosis)).